A 104-amino-acid chain; its full sequence is Large ribosomal subunit protein uL24 (104 aa).

It belongs to the universal ribosomal protein uL24 family. In terms of assembly, part of the 50S ribosomal subunit.

In terms of biological role, one of two assembly initiator proteins, it binds directly to the 5'-end of the 23S rRNA, where it nucleates assembly of the 50S subunit. One of the proteins that surrounds the polypeptide exit tunnel on the outside of the subunit. The protein is Large ribosomal subunit protein uL24 of Shewanella sediminis (strain HAW-EB3).